Here is a 2373-residue protein sequence, read N- to C-terminus: Highly reducing polyketide synthase (2373 aa).

The Ketosynthase family 3 (KS3) domain maps to 19 to 446 (QEPIAVVGIA…GSNAHVIVEE (428 aa)). Catalysis depends on for beta-ketoacyl synthase activity residues cysteine 192, histidine 329, and histidine 369. The malonyl-CoA:ACP transacylase (MAT) domain stretch occupies residues 560–874 (IFTGQGAQWP…QYTSAMARGA (315 aa)). Serine 652 (for malonyltransferase activity) is an active-site residue. The N-terminal hotdog fold stretch occupies residues 942–1078 (HDLLGSKVLG…GLIRIDEDVP (137 aa)). A dehydratase (DH) domain region spans residues 942 to 1241 (HDLLGSKVLG…LSGLRYTRID (300 aa)). One can recognise a PKS/mFAS DH domain in the interval 942–1246 (HDLLGSKVLG…YTRIDTGPSV (305 aa)). Histidine 974 functions as the Proton acceptor; for dehydratase activity in the catalytic mechanism. A C-terminal hotdog fold region spans residues 1090-1246 (SHQVDASLWH…YTRIDTGPSV (157 aa)). Aspartate 1154 functions as the Proton donor; for dehydratase activity in the catalytic mechanism. The segment at 1669–1985 (GTTDSLIYSE…SANHIGKIVI (317 aa)) is enoyl reductase (ER) domain. Positions 2010–2187 (GYLLIGGLKG…NSVDLGAIQD (178 aa)) are ketoreductase (KR) domain. Positions 2294-2370 (AIHDAVIDVT…QLAQKIVARL (77 aa)) constitute a Carrier domain. Serine 2330 carries the post-translational modification O-(pantetheine 4'-phosphoryl)serine.

It depends on pantetheine 4'-phosphate as a cofactor.

Its pathway is mycotoxin biosynthesis. In terms of biological role, highly reducing polyketide synthase; part of the gene cluster that mediates the biosynthesis of brefeldin A (BFA), a protein transport inhibitor that shows antiviral, antifungal, and antitumor properties. The proposed biosynthesis of BFA involves formation of an acyclic polyketide chain that is differentially tailored throughout the backbone. The highly reducing polyketide synthase Bref-PKS is proposed to synthesize the precisely reduced octaketide precursor, which could then be directly offloaded by the thiohydrolase enzyme Bref-TH followed by a cytochrome P450 monooxygenase-mediated formation of the cyclopentane ring and macrocyclization to afford 7-deoxy BFA. Alternatively, the first ring annulation can also occur on the ACP-tethered intermediate before the thiohydrolase release and lactonization. The C7-hydroxylation by another cytochrome P450 monooxygenase is believed to be the final step in the process to obtain the final structure of BFA. In addition to the HRPKS Bref-PKS and the thiohydrolase Bref-TH, the brefeldin A biosynthesis cluster contains 4 cytochrome p450 monooxygenases (called orf3 to orf6), as well a the probable cluster-specific transcription regulator orf8. The sequence is that of Highly reducing polyketide synthase from Eupenicillium brefeldianum (Penicillium brefeldianum).